The primary structure comprises 175 residues: Ribosome maturation factor RimM (175 aa).

The region spanning 97-169 is the PRC barrel domain; it reads EDKFYFHEII…TVRVITPEGL (73 aa).

The protein belongs to the RimM family. Binds ribosomal protein uS19.

Its subcellular location is the cytoplasm. In terms of biological role, an accessory protein needed during the final step in the assembly of 30S ribosomal subunit, possibly for assembly of the head region. Essential for efficient processing of 16S rRNA. May be needed both before and after RbfA during the maturation of 16S rRNA. It has affinity for free ribosomal 30S subunits but not for 70S ribosomes. This is Ribosome maturation factor RimM from Christiangramia forsetii (strain DSM 17595 / CGMCC 1.15422 / KT0803) (Gramella forsetii).